A 334-amino-acid chain; its full sequence is G-protein coupled receptor 12 (334 aa).

The Extracellular segment spans residues 1–48; sequence MNEDLKVNLSGLPRDYLDAAAAENISAAVSSRVPAVEPEPELVVNPWD. N-linked (GlcNAc...) asparagine glycans are attached at residues asparagine 8 and asparagine 24. A helical membrane pass occupies residues 49–69; it reads IVLCTSGTLISCENAIVVLII. Residues 70–77 are Cytoplasmic-facing; the sequence is FHNPSLRA. The chain crosses the membrane as a helical span at residues 78–98; the sequence is PMFLLIGSLALADLLAGIGLI. At 99 to 113 the chain is on the extracellular side; it reads TNFVFAYLLQSEATK. The chain crosses the membrane as a helical span at residues 114-134; that stretch reads LVTIGLIVASFSASVCSLLAI. Residues 135–158 are Cytoplasmic-facing; the sequence is TVDRYLSLYYALTYHSERTVTFTY. Residues 159 to 179 traverse the membrane as a helical segment; the sequence is VMLVMLWGTSICLGLLPVMGW. Residues 180 to 199 are Extracellular-facing; sequence NCLRDESTCSVVRPLTKNNA. The helical transmembrane segment at 200-220 threads the bilayer; the sequence is AILSVSFLFMFALMLQLYIQI. The Cytoplasmic segment spans residues 221–252; it reads CKIVMRHAHQIALQHHFLATSHYVTTRKGVST. Residues 253–273 form a helical membrane-spanning segment; that stretch reads LAIILGTFAACWMPFTLYSLI. Topologically, residues 274–282 are extracellular; sequence ADYTYPSIY. A helical transmembrane segment spans residues 283 to 303; it reads TYATLLPATYNSIINPVIYAF. The Cytoplasmic segment spans residues 304–334; sequence RNQEIQKALCLICCGCIPSSLAQRARSPSDV. Cysteine 317 carries S-palmitoyl cysteine lipidation. Phosphoserine is present on residues serine 330 and serine 332.

It belongs to the G-protein coupled receptor 1 family.

Its subcellular location is the cell membrane. In terms of biological role, promotes neurite outgrowth and blocks myelin inhibition in neurons. Receptor with constitutive G(s) signaling activity that stimulates cyclic AMP production. The protein is G-protein coupled receptor 12 (GPR12) of Homo sapiens (Human).